The following is a 209-amino-acid chain: Octanoyltransferase (209 aa).

Residues 29 to 209 enclose the BPL/LPL catalytic domain; it reads EHTPDELWVV…CHQLQPEIDS (181 aa). Residues 71–78, 138–140, and 151–153 contribute to the substrate site; these read RGGQVTYH, SLG, and GLA. Residue C169 is the Acyl-thioester intermediate of the active site.

This sequence belongs to the LipB family.

The protein localises to the cytoplasm. The catalysed reaction is octanoyl-[ACP] + L-lysyl-[protein] = N(6)-octanoyl-L-lysyl-[protein] + holo-[ACP] + H(+). It participates in protein modification; protein lipoylation via endogenous pathway; protein N(6)-(lipoyl)lysine from octanoyl-[acyl-carrier-protein]: step 1/2. Its function is as follows. Catalyzes the transfer of endogenously produced octanoic acid from octanoyl-acyl-carrier-protein onto the lipoyl domains of lipoate-dependent enzymes. Lipoyl-ACP can also act as a substrate although octanoyl-ACP is likely to be the physiological substrate. The chain is Octanoyltransferase from Hydrogenovibrio crunogenus (strain DSM 25203 / XCL-2) (Thiomicrospira crunogena).